The primary structure comprises 183 residues: Large ribosomal subunit protein uL10 (183 aa).

The protein belongs to the universal ribosomal protein uL10 family. Part of the ribosomal stalk of the 50S ribosomal subunit. The N-terminus interacts with L11 and the large rRNA to form the base of the stalk. The C-terminus forms an elongated spine to which L12 dimers bind in a sequential fashion forming a multimeric L10(L12)X complex.

Forms part of the ribosomal stalk, playing a central role in the interaction of the ribosome with GTP-bound translation factors. The polypeptide is Large ribosomal subunit protein uL10 (Mesomycoplasma hyopneumoniae (strain 232) (Mycoplasma hyopneumoniae)).